We begin with the raw amino-acid sequence, 545 residues long: Calcium-dependent protein kinase 6 (545 aa).

Gly-2 carries the N-myristoyl glycine lipid modification. A compositionally biased stretch (low complexity) spans 34–43; it reads CSSTSTATSS. The disordered stretch occupies residues 34–58; sequence CSSTSTATSSGGRMPIRSHQQRLSS. In terms of domain architecture, Protein kinase spans 74–332; the sequence is YTVGRKLGQG…AHQVLCHPWV (259 aa). Residues 80-88 and Lys-103 contribute to the ATP site; that span reads LGQGQFGTT. Catalysis depends on Asp-198, which acts as the Proton acceptor. Residues 338-368 form an autoinhibitory domain region; sequence APDRPLAPAVLSRLKQFSAMNRLKKMALRVI. EF-hand domains follow at residues 375 to 410, 411 to 446, 447 to 482, and 486 to 516; these read EELA…YGSN, LREA…LNKL, EREE…HNMA, and IDDI…GAID. Residues Asp-388, Asp-390, Ser-392, Glu-399, Asp-424, Asp-426, Ser-428, Thr-430, Glu-435, Asp-460, Asp-462, Ser-464, Tyr-466, Glu-471, Asp-494, Asp-496, Asp-498, Arg-500, and Glu-505 each contribute to the Ca(2+) site. A disordered region spans residues 526–545; it reads GRPTTATSDDPSPTISSSSR. The segment covering 528-545 has biased composition (low complexity); it reads PTTATSDDPSPTISSSSR.

It belongs to the protein kinase superfamily. Ser/Thr protein kinase family. CDPK subfamily.

The protein resides in the membrane. It carries out the reaction L-seryl-[protein] + ATP = O-phospho-L-seryl-[protein] + ADP + H(+). The catalysed reaction is L-threonyl-[protein] + ATP = O-phospho-L-threonyl-[protein] + ADP + H(+). With respect to regulation, activated by calcium. Autophosphorylation may play an important role in the regulation of the kinase activity. May play a role in signal transduction pathways that involve calcium as a second messenger. The chain is Calcium-dependent protein kinase 6 from Oryza sativa subsp. japonica (Rice).